Here is a 320-residue protein sequence, read N- to C-terminus: Malate dehydrogenase (320 aa).

Residues 10–15 (GSGMIG) and Asp-34 contribute to the NAD(+) site. Substrate contacts are provided by Arg-83 and Arg-89. NAD(+) contacts are provided by residues Asn-96 and 119-121 (ITN). Residues Asn-121 and Arg-152 each contribute to the substrate site. Residue His-176 is the Proton acceptor of the active site.

It belongs to the LDH/MDH superfamily. MDH type 3 family.

It catalyses the reaction (S)-malate + NAD(+) = oxaloacetate + NADH + H(+). Catalyzes the reversible oxidation of malate to oxaloacetate. The polypeptide is Malate dehydrogenase (Agrobacterium fabrum (strain C58 / ATCC 33970) (Agrobacterium tumefaciens (strain C58))).